Consider the following 402-residue polypeptide: GTPase HflX (402 aa).

Positions 181–350 (DTVGLIGYTN…MIIEHLNLSI (170 aa)) constitute a Hflx-type G domain. GTP-binding positions include 187-194 (GYTNAGKT), 212-216 (FTTLT), 233-236 (DTVG), 300-303 (NKVD), and 328-330 (SAK). Residues Thr-194 and Thr-214 each contribute to the Mg(2+) site.

This sequence belongs to the TRAFAC class OBG-HflX-like GTPase superfamily. HflX GTPase family. Monomer. Associates with the 50S ribosomal subunit. It depends on Mg(2+) as a cofactor.

The protein resides in the cytoplasm. GTPase that associates with the 50S ribosomal subunit and may have a role during protein synthesis or ribosome biogenesis. In Methanocaldococcus jannaschii (strain ATCC 43067 / DSM 2661 / JAL-1 / JCM 10045 / NBRC 100440) (Methanococcus jannaschii), this protein is GTPase HflX.